The chain runs to 297 residues: 4-diphosphocytidyl-2-C-methyl-D-erythritol kinase (297 aa).

Active-site residues include Lys-6 and Asp-144.

This sequence belongs to the GHMP kinase family. IspE subfamily.

It carries out the reaction 4-CDP-2-C-methyl-D-erythritol + ATP = 4-CDP-2-C-methyl-D-erythritol 2-phosphate + ADP + H(+). Its pathway is isoprenoid biosynthesis; isopentenyl diphosphate biosynthesis via DXP pathway; isopentenyl diphosphate from 1-deoxy-D-xylulose 5-phosphate: step 3/6. In terms of biological role, catalyzes the phosphorylation of the position 2 hydroxy group of 4-diphosphocytidyl-2C-methyl-D-erythritol. In Leptospira interrogans serogroup Icterohaemorrhagiae serovar Lai (strain 56601), this protein is 4-diphosphocytidyl-2-C-methyl-D-erythritol kinase.